We begin with the raw amino-acid sequence, 373 residues long: Methylmalonyl-CoA decarboxylase subunit beta (373 aa).

Helical transmembrane passes span 17 to 37, 38 to 58, 81 to 101, 106 to 126, 132 to 152, 156 to 176, 206 to 226, 257 to 277, 280 to 300, and 343 to 363; these read FLAFTTGNAIMILVGLILLYL, AFAREFEPLLLGPIAFGCLLA, IFPPLIFLGVGAMTDFGPLIA, LLLGAAAQIGVFAALGGAMML, EAAAIGIIGGADGPTSIYLAT, PHLLGAIAVAAYSYMSLVPLI, IVFPIVATIFISLLLPSITSL, VTIFLATGTGLTMSAEHFLSL, IKIILLGLFAFICGTAGGVLF, and FLLMHAMGPNVAGVIGTAVAA.

This sequence belongs to the GcdB/MmdB/OadB family. As to quaternary structure, the methylmalonyl-CoA decarboxylase is composed of five subunits: the carboxyltransferase alpha subunit (MmdA), the tunnel beta subunit (MmdB), the biotin-containing gamma subunit (MmdC), and the delta (MmdD) and epsilon (MmdE) subunits. Post-translationally, the N-terminus is blocked.

The protein resides in the cell membrane. The catalysed reaction is (S)-methylmalonyl-CoA + Na(+)(in) + H(+)(out) = propanoyl-CoA + Na(+)(out) + CO2. With respect to regulation, completely inhibited by avidin. Tunnel subunit of the sodium ion pump methylmalonyl-CoA decarboxylase, which converts the chemical energy of a decarboxylation reaction into an electrochemical gradient of Na(+) ions across the cytoplasmic membrane, thereby creating a sodium ion motive force that is used for ATP synthesis. The beta subunit catalyzes the decarboxylation of the carboxybiotin carrier protein and the coupled export of Na(+) ions. Can also convert malonyl-CoA into acetyl-CoA. The sequence is that of Methylmalonyl-CoA decarboxylase subunit beta from Veillonella parvula (Staphylococcus parvulus).